A 56-amino-acid chain; its full sequence is uncharacterized protein (56 aa).

The interval 15–56 is disordered; that stretch reads SIGNISSGNINNSIGNSSSSGCDDVFNNSTNNNNNNNNNNNK.

This is an uncharacterized protein from Dictyostelium discoideum (Social amoeba).